The primary structure comprises 1110 residues: Sex-determining transformer protein 1 (1110 aa).

Disordered regions lie at residues 1–103 (MMAP…AQQS) and 170–202 (TING…DSDM). The span at 44-61 (GSEDKQPGGGDVKTENDP) shows a compositional bias: basic and acidic residues. Residues 65–90 (GLGSATSNFIQSSVPPSHQTLSNPLQ) show a composition bias toward polar residues. Residues 188–201 (NNAANSSNSGNDSD) are compositionally biased toward low complexity. The segment at 208 to 233 (LTCRWKSCNSSFQTLKALVDHVQESH) adopts a C2H2-type 1; low DNA-binding affinity zinc-finger fold. The C2H2-type 2; low DNA-binding affinity zinc finger occupies 244-270 (WRCEWEGCDRNETFKALYMLIVHVRRH). 3 C2H2-type zinc fingers span residues 276-300 (NKCE…RRTH), 306-331 (YKCE…NRTH), and 337-362 (YSCQ…KAVH). Disordered stretches follow at residues 363-397 (GDDE…AMSH), 594-682 (EVEP…GSGE), 875-895 (RNVG…DQDR), and 1057-1110 (QEQP…RHQF). Over residues 597 to 606 (PLQQQQQQEP) the composition is skewed to low complexity. Residues 641-652 (GNNGDGGFGGSG) show a composition bias toward gly residues. Residues 669–678 (PISQNGSRAS) show a composition bias toward polar residues. Basic and acidic residues predominate over residues 886–895 (RNNRGHDQDR). Over residues 1057 to 1066 (QEQPTSSFSS) the composition is skewed to polar residues. Over residues 1076 to 1086 (ALPPPPPPPAP) the composition is skewed to pro residues. The span at 1092–1103 (SADNKDDSENIP) shows a compositional bias: basic and acidic residues.

Belongs to the GLI C2H2-type zinc-finger protein family. In terms of assembly, interacts with the MX regulatory domain of tra-2. Expressed in intestine and gonads (at protein level).

The protein resides in the cytoplasm. It is found in the nucleus. In terms of biological role, plays a major role in controlling sexual phenotype. Terminal global regulator in a well-characterized cascade of sex-determining genes. Promotes female development. Interacts with tra-2 to promote spermatogenesis. Promotes spermatogenesis through the Tip60 HAT complex and by regulating the expression of genes, such as fog-3, required for male development. Association with chromatin and at the fog-3 promoter requires wdr-5.1, and may also require wdr-5.2. With trr-1, activates the fog-3 gene to determine sperm/oocyte cell fate. In hermaphrodites, binds to an intronic regulatory site in the ceh-30 gene, preventing ceh-30 transcription and thereby preventing survival of the CEM (cephalic male) sensory neurons. Represses the expression of the transcription factor dmd-3 in hermaphrodites to govern the timing and extent of male tail tip morphogenesis. Plays a role in controlling the sex-specific differentiation of PHC sensory neurons and represses the development of male-specific morphological features. The chain is Sex-determining transformer protein 1 from Caenorhabditis elegans.